Reading from the N-terminus, the 412-residue chain is Gamma-glutamyl phosphate reductase (412 aa).

It belongs to the gamma-glutamyl phosphate reductase family.

The protein localises to the cytoplasm. The catalysed reaction is L-glutamate 5-semialdehyde + phosphate + NADP(+) = L-glutamyl 5-phosphate + NADPH + H(+). It functions in the pathway amino-acid biosynthesis; L-proline biosynthesis; L-glutamate 5-semialdehyde from L-glutamate: step 2/2. Functionally, catalyzes the NADPH-dependent reduction of L-glutamate 5-phosphate into L-glutamate 5-semialdehyde and phosphate. The product spontaneously undergoes cyclization to form 1-pyrroline-5-carboxylate. This is Gamma-glutamyl phosphate reductase from Streptococcus suis (strain 98HAH33).